Consider the following 704-residue polypeptide: Translin-associated factor X-interacting protein 1 (704 aa).

Residues 1–37 (MANLQERKSFSKPRISIQASGGTPEAKGIEKRKLSQK) are disordered. Coiled-coil stretches lie at residues 190-230 (EISV…AEEY) and 304-342 (RRDL…LQLH).

In terms of assembly, interacts with TSNAX. Specifically expressed in testes. Predominantly detected in the post-meiotic stages of germ cells.

It is found in the cytoplasm. It localises to the perinuclear region. Possible role in spermatogenesis. In Mus musculus (Mouse), this protein is Translin-associated factor X-interacting protein 1.